Consider the following 295-residue polypeptide: Protoheme IX farnesyltransferase (295 aa).

Over 1-9 (MSVKHFIQI) the chain is Cytoplasmic. Residues 10 to 28 (TKPGIIFGNVLSVAGGFFL) form a helical membrane-spanning segment. The Periplasmic portion of the chain corresponds to 29–37 (ASKGHVDFA). A helical membrane pass occupies residues 38–56 (LFLAVVIGTSLVVASGCVF). Residues 57-78 (NNCIDRDIDHKMERTKNRVMVQ) are Cytoplasmic-facing. A helical membrane pass occupies residues 79-97 (GGMSLPLALIYATLLGVAG). At 98-107 (FSLLYVQANP) the chain is on the periplasmic side. A helical membrane pass occupies residues 108-126 (LSAFCALIGFIVYVGFYSL). The Cytoplasmic segment spans residues 127-197 (WLKRKSVHGT…YSAANIPVLP (71 aa)). Residues 198 to 216 (VARGILAAKKQIVLYVLAF) form a helical membrane-spanning segment. Residues 217–228 (VLATLMLTLGGY) are Periplasmic-facing. The helical transmembrane segment at 229-247 (AGLGYLAVAAAMGLYWLYM) threads the bilayer. Topologically, residues 248-268 (AWGGYKAEDDSKWARKVFGFS) are cytoplasmic. The helical transmembrane segment at 269-287 (ILTVTALSVMMGVDSQTAA) threads the bilayer. Residues 288–295 (DVLMTYAR) lie on the Periplasmic side of the membrane.

The protein belongs to the UbiA prenyltransferase family. Mg(2+) is required as a cofactor. Requires Ca(2+) as cofactor.

It is found in the cell inner membrane. It carries out the reaction heme b + (2E,6E)-farnesyl diphosphate + H2O = Fe(II)-heme o + diphosphate. Converts protoheme IX and farnesyl diphosphate to heme O. This chain is Protoheme IX farnesyltransferase (cyoE), found in Pseudomonas putida (Arthrobacter siderocapsulatus).